The primary structure comprises 183 residues: uncharacterized protein (183 aa).

The protein to A.muscaria DOPA 4,5-dioxygenase.

This is an uncharacterized protein from Botryotinia fuckeliana (Noble rot fungus).